The following is a 275-amino-acid chain: 4-hydroxy-3-methylbut-2-enyl diphosphate reductase (275 aa).

Cysteine 12 is a [4Fe-4S] cluster binding site. Positions 36 and 70 each coordinate (2E)-4-hydroxy-3-methylbut-2-enyl diphosphate. Histidine 36 and histidine 70 together coordinate dimethylallyl diphosphate. Histidine 36 and histidine 70 together coordinate isopentenyl diphosphate. Residue cysteine 92 coordinates [4Fe-4S] cluster. Residue histidine 120 participates in (2E)-4-hydroxy-3-methylbut-2-enyl diphosphate binding. Histidine 120 serves as a coordination point for dimethylallyl diphosphate. Histidine 120 provides a ligand contact to isopentenyl diphosphate. The Proton donor role is filled by glutamate 122. A (2E)-4-hydroxy-3-methylbut-2-enyl diphosphate-binding site is contributed by threonine 158. Cysteine 186 provides a ligand contact to [4Fe-4S] cluster. The (2E)-4-hydroxy-3-methylbut-2-enyl diphosphate site is built by serine 214, serine 215, asparagine 216, and serine 258. Residues serine 214, serine 215, asparagine 216, and serine 258 each contribute to the dimethylallyl diphosphate site. Residues serine 214, serine 215, asparagine 216, and serine 258 each contribute to the isopentenyl diphosphate site.

The protein belongs to the IspH family. [4Fe-4S] cluster serves as cofactor.

The enzyme catalyses isopentenyl diphosphate + 2 oxidized [2Fe-2S]-[ferredoxin] + H2O = (2E)-4-hydroxy-3-methylbut-2-enyl diphosphate + 2 reduced [2Fe-2S]-[ferredoxin] + 2 H(+). It catalyses the reaction dimethylallyl diphosphate + 2 oxidized [2Fe-2S]-[ferredoxin] + H2O = (2E)-4-hydroxy-3-methylbut-2-enyl diphosphate + 2 reduced [2Fe-2S]-[ferredoxin] + 2 H(+). The protein operates within isoprenoid biosynthesis; dimethylallyl diphosphate biosynthesis; dimethylallyl diphosphate from (2E)-4-hydroxy-3-methylbutenyl diphosphate: step 1/1. It functions in the pathway isoprenoid biosynthesis; isopentenyl diphosphate biosynthesis via DXP pathway; isopentenyl diphosphate from 1-deoxy-D-xylulose 5-phosphate: step 6/6. Its function is as follows. Catalyzes the conversion of 1-hydroxy-2-methyl-2-(E)-butenyl 4-diphosphate (HMBPP) into a mixture of isopentenyl diphosphate (IPP) and dimethylallyl diphosphate (DMAPP). Acts in the terminal step of the DOXP/MEP pathway for isoprenoid precursor biosynthesis. The sequence is that of 4-hydroxy-3-methylbut-2-enyl diphosphate reductase from Sulfurimonas denitrificans (strain ATCC 33889 / DSM 1251) (Thiomicrospira denitrificans (strain ATCC 33889 / DSM 1251)).